The following is a 185-amino-acid chain: ATP-dependent protease subunit HslV (185 aa).

Threonine 12 is an active-site residue. The Na(+) site is built by alanine 168, cysteine 171, and threonine 174.

This sequence belongs to the peptidase T1B family. HslV subfamily. A double ring-shaped homohexamer of HslV is capped on each side by a ring-shaped HslU homohexamer. The assembly of the HslU/HslV complex is dependent on binding of ATP.

It localises to the cytoplasm. It catalyses the reaction ATP-dependent cleavage of peptide bonds with broad specificity.. Allosterically activated by HslU binding. In terms of biological role, protease subunit of a proteasome-like degradation complex believed to be a general protein degrading machinery. The polypeptide is ATP-dependent protease subunit HslV (Dinoroseobacter shibae (strain DSM 16493 / NCIMB 14021 / DFL 12)).